Consider the following 251-residue polypeptide: Ubiquinone/menaquinone biosynthesis C-methyltransferase UbiE (251 aa).

S-adenosyl-L-methionine-binding positions include Thr-74, Asp-95, and 123–124 (NA).

This sequence belongs to the class I-like SAM-binding methyltransferase superfamily. MenG/UbiE family.

It catalyses the reaction a 2-demethylmenaquinol + S-adenosyl-L-methionine = a menaquinol + S-adenosyl-L-homocysteine + H(+). The catalysed reaction is a 2-methoxy-6-(all-trans-polyprenyl)benzene-1,4-diol + S-adenosyl-L-methionine = a 5-methoxy-2-methyl-3-(all-trans-polyprenyl)benzene-1,4-diol + S-adenosyl-L-homocysteine + H(+). The protein operates within quinol/quinone metabolism; menaquinone biosynthesis; menaquinol from 1,4-dihydroxy-2-naphthoate: step 2/2. It functions in the pathway cofactor biosynthesis; ubiquinone biosynthesis. Methyltransferase required for the conversion of demethylmenaquinol (DMKH2) to menaquinol (MKH2) and the conversion of 2-polyprenyl-6-methoxy-1,4-benzoquinol (DDMQH2) to 2-polyprenyl-3-methyl-6-methoxy-1,4-benzoquinol (DMQH2). This Shewanella piezotolerans (strain WP3 / JCM 13877) protein is Ubiquinone/menaquinone biosynthesis C-methyltransferase UbiE.